We begin with the raw amino-acid sequence, 232 residues long: Lipoprotein-releasing system ATP-binding protein LolD (232 aa).

An ABC transporter domain is found at 11–231; the sequence is VYLHDIKRQY…SIEDGVIVEL (221 aa). 47–54 lines the ATP pocket; that stretch reads APSGSGKS.

It belongs to the ABC transporter superfamily. Lipoprotein translocase (TC 3.A.1.125) family. As to quaternary structure, the complex is composed of two ATP-binding proteins (LolD) and two transmembrane proteins (LolC and LolE).

Its subcellular location is the cell inner membrane. Functionally, part of the ABC transporter complex LolCDE involved in the translocation of mature outer membrane-directed lipoproteins, from the inner membrane to the periplasmic chaperone, LolA. Responsible for the formation of the LolA-lipoprotein complex in an ATP-dependent manner. This chain is Lipoprotein-releasing system ATP-binding protein LolD, found in Rhodopseudomonas palustris (strain BisB5).